Here is a 241-residue protein sequence, read N- to C-terminus: 3-deoxy-D-manno-octulosonic acid kinase (241 aa).

The active site involves D171.

It belongs to the protein kinase superfamily. KdkA/RfaP family.

It is found in the cell inner membrane. It carries out the reaction an alpha-Kdo-(2-&gt;6)-lipid IVA + ATP = a 4-O-phospho-alpha-Kdo-(2-&gt;6)-lipid IVA + ADP + H(+). It participates in bacterial outer membrane biogenesis; LPS core biosynthesis. Functionally, catalyzes the ATP-dependent phosphorylation of the 3-deoxy-D-manno-octulosonic acid (Kdo) residue in Kdo-lipid IV(A) at the 4-OH position. The chain is 3-deoxy-D-manno-octulosonic acid kinase from Haemophilus influenzae (strain PittGG).